Reading from the N-terminus, the 27-residue chain is uncharacterized protein (27 aa).

A helical transmembrane segment spans residues 3–23; sequence IILWAVLIIFLIGLLVVTGVF.

It localises to the cell inner membrane. This is an uncharacterized protein from Escherichia coli (strain K12).